A 556-amino-acid polypeptide reads, in one-letter code: 2-succinyl-5-enolpyruvyl-6-hydroxy-3-cyclohexene-1-carboxylate synthase (556 aa).

It belongs to the TPP enzyme family. MenD subfamily. In terms of assembly, homodimer. Mg(2+) is required as a cofactor. The cofactor is Mn(2+). It depends on thiamine diphosphate as a cofactor.

The catalysed reaction is isochorismate + 2-oxoglutarate + H(+) = 5-enolpyruvoyl-6-hydroxy-2-succinyl-cyclohex-3-ene-1-carboxylate + CO2. Its pathway is quinol/quinone metabolism; 1,4-dihydroxy-2-naphthoate biosynthesis; 1,4-dihydroxy-2-naphthoate from chorismate: step 2/7. It functions in the pathway quinol/quinone metabolism; menaquinone biosynthesis. Catalyzes the thiamine diphosphate-dependent decarboxylation of 2-oxoglutarate and the subsequent addition of the resulting succinic semialdehyde-thiamine pyrophosphate anion to isochorismate to yield 2-succinyl-5-enolpyruvyl-6-hydroxy-3-cyclohexene-1-carboxylate (SEPHCHC). This chain is 2-succinyl-5-enolpyruvyl-6-hydroxy-3-cyclohexene-1-carboxylate synthase, found in Escherichia coli (strain 55989 / EAEC).